A 360-amino-acid polypeptide reads, in one-letter code: UDP-N-acetylglucosamine--N-acetylmuramyl-(pentapeptide) pyrophosphoryl-undecaprenol N-acetylglucosamine transferase (360 aa).

UDP-N-acetyl-alpha-D-glucosamine is bound by residues 17-19 (TAG), N130, R166, S200, I247, and Q291.

The protein belongs to the glycosyltransferase 28 family. MurG subfamily.

It is found in the cell membrane. The enzyme catalyses di-trans,octa-cis-undecaprenyl diphospho-N-acetyl-alpha-D-muramoyl-L-alanyl-D-glutamyl-meso-2,6-diaminopimeloyl-D-alanyl-D-alanine + UDP-N-acetyl-alpha-D-glucosamine = di-trans,octa-cis-undecaprenyl diphospho-[N-acetyl-alpha-D-glucosaminyl-(1-&gt;4)]-N-acetyl-alpha-D-muramoyl-L-alanyl-D-glutamyl-meso-2,6-diaminopimeloyl-D-alanyl-D-alanine + UDP + H(+). It functions in the pathway cell wall biogenesis; peptidoglycan biosynthesis. Cell wall formation. Catalyzes the transfer of a GlcNAc subunit on undecaprenyl-pyrophosphoryl-MurNAc-pentapeptide (lipid intermediate I) to form undecaprenyl-pyrophosphoryl-MurNAc-(pentapeptide)GlcNAc (lipid intermediate II). The polypeptide is UDP-N-acetylglucosamine--N-acetylmuramyl-(pentapeptide) pyrophosphoryl-undecaprenol N-acetylglucosamine transferase (Corynebacterium efficiens (strain DSM 44549 / YS-314 / AJ 12310 / JCM 11189 / NBRC 100395)).